Here is a 336-residue protein sequence, read N- to C-terminus: DNA repair protein XRCC4 (336 aa).

Residues 1–213 (MERKISRIHL…EREKDIKQEG (213 aa)) form an interaction with IFFO1 region. A Phosphoserine; by PRKDC modification is found at S53. Coiled coils occupy residues 131 to 165 (LDTI…FEKC) and 184 to 212 (LNEK…IKQE). Residues 180–213 (FILVLNEKKTKIRSLHNKLLNAAQEREKDIKQEG) form an interaction with LIG4 region. S193 is subject to Phosphoserine; by PRKDC. K210 is covalently cross-linked (Glycyl lysine isopeptide (Lys-Gly) (interchain with G-Cter in SUMO)). Residues 212 to 249 (EGETAICSEMTADRDPVYDESTDEESENQTDLSGLASA) are disordered. Y229 is subject to Phosphotyrosine. A compositionally biased stretch (acidic residues) spans 229-239 (YDESTDEESEN). Position 232 is a phosphoserine (S232). Position 233 is a phosphothreonine; by CK2 (T233). Residues S237 and S256 each carry the phosphoserine modification. S260 is modified (phosphoserine; by PRKDC). Positions 264–336 (TDIAPSRKRR…SSPEDLFDEI (73 aa)) are disordered. A Nuclear localization signal motif is present at residues 270–275 (RKRRQR). K296 is covalently cross-linked (Glycyl lysine isopeptide (Lys-Gly) (interchain with G-Cter in ubiquitin)). S303, S304, S315, and S320 each carry phosphoserine; by PRKDC. The span at 317–329 (ENMSLETLRNSSP) shows a compositional bias: polar residues. T323 carries the post-translational modification Phosphothreonine; by PRKDC. 2 positions are modified to phosphoserine; by PRKDC: S327 and S328.

The protein belongs to the XRCC4-XLF family. XRCC4 subfamily. Homodimer and homotetramer in solution. Interacts with NHEJ1/XLF; the interaction is direct and is mediated via a head-to-head interaction between N-terminal head regions. Interacts with LIG4; the LIG4-XRCC4 subcomplex has a 1:2 stoichiometry and XRCC4 is required for LIG4 stability. Component of the core long-range non-homologous end joining (NHEJ) complex (also named DNA-PK complex) composed of PRKDC, LIG4, XRCC4, XRCC6/Ku70, XRCC5/Ku86 and NHEJ1/XLF. Additional component of the NHEJ complex includes PAXX. Following autophosphorylation, PRKDC dissociates from DNA, leading to formation of the short-range NHEJ complex, composed of LIG4, XRCC4, XRCC6/Ku70, XRCC5/Ku86 and NHEJ1/XLF. Interacts with PRKDC; the interaction is direct. Interacts with XRCC6/Ku70; the interaction is direct. Interacts with APTX and APLF. Forms a heterotetramer with IFFO1; the interaction involves LIG4-free XRCC4 and leads to the relocalization of IFFO1 to the sites of DNA damage. Interacts with PNKP; mainly interacts with PNKP when phosphorylated at Thr-233, but is also able to interact at much lower level with PNKP when not unphosphorylated. Interacts with POLL (DNA polymerase lambda). In terms of assembly, interacts with XKR4; interacts with the processed form of XKR4, which is cleaved by caspase. In terms of processing, phosphorylated by PRKDC at the C-terminus in response to DNA damage; Ser-260 and Ser-320 constitute the main phosphorylation sites. Phosphorylations by PRKDC at the C-terminus of XRCC4 and NHEJ1/XLF are highly redundant and regulate ability of the XRCC4-NHEJ1/XLF subcomplex to bridge DNA. Phosphorylation by PRKDC does not prevent interaction with NHEJ1/XLF but disrupts ability to bridge DNA and promotes detachment from DNA. Phosphorylation at Ser-327 and Ser-328 by PRKDC promotes recognition by the SCF(FBXW7) complex and subsequent ubiquitination via 'Lys-63'-linked ubiquitin. Phosphorylation at Thr-233 by CK2 promotes interaction with PNKP; regulating PNKP activity and localization to DNA damage sites. Phosphorylation by CK2 promotes interaction with APTX. Post-translationally, ubiquitinated at Lys-296 by the SCF(FBXW7) complex via 'Lys-63'-linked ubiquitination, thereby promoting double-strand break repair: the SCF(FBXW7) complex specifically recognizes XRCC4 when phosphorylated at Ser-327 and Ser-328 by PRKDC, and 'Lys-63'-linked ubiquitination facilitates DNA non-homologous end joining (NHEJ) by enhancing association with XRCC5/Ku80 and XRCC6/Ku70. Monoubiquitinated. Undergoes proteolytic processing by caspase-3 (CASP3). This generates the protein XRCC4, C-terminus (XRCC4/C), which translocates to the cytoplasm and activates phospholipid scramblase activity of XKR4, thereby promoting phosphatidylserine exposure on apoptotic cell surface. As to expression, widely expressed.

The protein resides in the nucleus. It localises to the chromosome. Its subcellular location is the cytoplasm. Functionally, DNA non-homologous end joining (NHEJ) core factor, required for double-strand break repair and V(D)J recombination. Acts as a scaffold protein that regulates recruitment of other proteins to DNA double-strand breaks (DSBs). Associates with NHEJ1/XLF to form alternating helical filaments that bridge DNA and act like a bandage, holding together the broken DNA until it is repaired. The XRCC4-NHEJ1/XLF subcomplex binds to the DNA fragments of a DSB in a highly diffusive manner and robustly bridges two independent DNA molecules, holding the broken DNA fragments in close proximity to one other. The mobility of the bridges ensures that the ends remain accessible for further processing by other repair factors. Plays a key role in the NHEJ ligation step of the broken DNA during DSB repair via direct interaction with DNA ligase IV (LIG4): the LIG4-XRCC4 subcomplex reseals the DNA breaks after the gap filling is completed. XRCC4 stabilizes LIG4, regulates its subcellular localization and enhances LIG4's joining activity. Binding of the LIG4-XRCC4 subcomplex to DNA ends is dependent on the assembly of the DNA-dependent protein kinase complex DNA-PK to these DNA ends. Promotes displacement of PNKP from processed strand break termini. Acts as an activator of the phospholipid scramblase activity of XKR4. This form, which is generated upon caspase-3 (CASP3) cleavage, translocates into the cytoplasm and interacts with XKR4, thereby promoting phosphatidylserine scramblase activity of XKR4 and leading to phosphatidylserine exposure on apoptotic cell surface. In Homo sapiens (Human), this protein is DNA repair protein XRCC4.